The following is a 560-amino-acid chain: Glutamate--tRNA ligase (560 aa).

The 'HIGH' region signature appears at 108 to 118 (PNPSGPLHLGH).

This sequence belongs to the class-I aminoacyl-tRNA synthetase family. Glutamate--tRNA ligase type 2 subfamily.

It localises to the cytoplasm. It carries out the reaction tRNA(Glu) + L-glutamate + ATP = L-glutamyl-tRNA(Glu) + AMP + diphosphate. Its function is as follows. Catalyzes the attachment of glutamate to tRNA(Glu) in a two-step reaction: glutamate is first activated by ATP to form Glu-AMP and then transferred to the acceptor end of tRNA(Glu). This chain is Glutamate--tRNA ligase, found in Methanocorpusculum labreanum (strain ATCC 43576 / DSM 4855 / Z).